Consider the following 199-residue polypeptide: Small ribosomal subunit protein uS4c (199 aa).

Residues 1 to 24 (MESDQSKVESDQSKMESDQSKVES) show a composition bias toward basic and acidic residues. Positions 1–35 (MESDQSKVESDQSKMESDQSKVESDQSISQSTSKK) are disordered. Positions 84 to 146 (MRLDNIIFRL…QKSQELIKRN (63 aa)) constitute an S4 RNA-binding domain.

Belongs to the universal ribosomal protein uS4 family. Part of the 30S ribosomal subunit. Contacts protein S5. The interaction surface between S4 and S5 is involved in control of translational fidelity.

It is found in the plastid. The protein resides in the chloroplast. Functionally, one of the primary rRNA binding proteins, it binds directly to 16S rRNA where it nucleates assembly of the body of the 30S subunit. In terms of biological role, with S5 and S12 plays an important role in translational accuracy. The sequence is that of Small ribosomal subunit protein uS4c (rps4) from Psilotum nudum (Whisk fern).